The chain runs to 236 residues: Carbonyl reductase family member 4 (236 aa).

Residues 11-14, 34-35, Asp55, and 82-84 contribute to the NADP(+) site; these read SRGI, RN, and SAG. Residue Ser134 participates in substrate binding. NADP(+)-binding positions include Tyr147, Lys151, and 180–182; that span reads IRT. Tyr147 (proton acceptor) is an active-site residue.

Belongs to the short-chain dehydrogenases/reductases (SDR) family. In terms of assembly, homotetramer (in vitro). Heterotetramer with HSD17B8; contains two molecules each of HSD17B8 and CBR4.

The protein resides in the mitochondrion matrix. It functions in the pathway lipid metabolism; fatty acid biosynthesis. In terms of biological role, the heterotetramer with HSD17B8 has NADH-dependent 3-ketoacyl-acyl carrier protein reductase activity, and thereby plays a role in mitochondrial fatty acid biosynthesis. Within the heterotetramer, HSD17B8 binds NADH; CBR4 binds NADPD. The homotetramer has NADPH-dependent quinone reductase activity. Both homotetramer and the heterotetramer have broad in vitro substrate specificity and can reduce 9,10-phenanthrenequinone, 1,4-benzoquinone and various other o-quinones and p-quinones. This chain is Carbonyl reductase family member 4 (cbr4), found in Xenopus laevis (African clawed frog).